A 304-amino-acid chain; its full sequence is Murein tetrapeptide carboxypeptidase (304 aa).

Serine 106 (nucleophile) is an active-site residue. Active-site charge relay system residues include glutamate 200 and histidine 270.

This sequence belongs to the peptidase S66 family.

The protein resides in the cytoplasm. It carries out the reaction N-acetyl-D-glucosaminyl-N-acetylmuramoyl-L-alanyl-meso-2,6-diaminoheptanedioyl-D-alanine + H2O = N-acetyl-D-glucosaminyl-N-acetylmuramoyl-L-alanyl-meso-2,6-diaminoheptanedioate + D-alanine. It functions in the pathway cell wall biogenesis; peptidoglycan recycling. Its activity is regulated as follows. Inhibited by beta-lactams containing a D-amino acid side chain. Its function is as follows. Releases the terminal D-alanine residue from the cytoplasmic tetrapeptide recycling product L-Ala-gamma-D-Glu-meso-Dap-D-Ala. To a lesser extent, can also cleave D-Ala from murein derivatives containing the tetrapeptide, i.e. MurNAc-tetrapeptide, UDP-MurNAc-tetrapeptide, GlcNAc-MurNAc-tetrapeptide, and GlcNAc-anhMurNAc-tetrapeptide. Does not act on murein sacculi or cross-linked muropeptides. The tripeptides produced by the LcdA reaction can then be reused as peptidoglycan building blocks; LcdA is thereby involved in murein recycling. Is also essential for viability during stationary phase. In Escherichia coli (strain K12), this protein is Murein tetrapeptide carboxypeptidase (ldcA).